A 657-amino-acid polypeptide reads, in one-letter code: Threonine--tRNA ligase (657 aa).

Residues 7 to 70 form the TGS domain; that stretch reads QQASIAITLP…LCDANIEIVT (64 aa). The tract at residues 253–555 is catalytic; it reads DHRKLGTELE…LIEHTAGNFP (303 aa). Zn(2+) is bound by residues Cys-351, His-402, and His-532.

It belongs to the class-II aminoacyl-tRNA synthetase family. In terms of assembly, homodimer. It depends on Zn(2+) as a cofactor.

Its subcellular location is the cytoplasm. The catalysed reaction is tRNA(Thr) + L-threonine + ATP = L-threonyl-tRNA(Thr) + AMP + diphosphate + H(+). In terms of biological role, catalyzes the attachment of threonine to tRNA(Thr) in a two-step reaction: L-threonine is first activated by ATP to form Thr-AMP and then transferred to the acceptor end of tRNA(Thr). Also edits incorrectly charged L-seryl-tRNA(Thr). The chain is Threonine--tRNA ligase from Chlorobium limicola (strain DSM 245 / NBRC 103803 / 6330).